A 360-amino-acid polypeptide reads, in one-letter code: Peptide chain release factor 1 (360 aa).

Q235 carries the N5-methylglutamine modification.

This sequence belongs to the prokaryotic/mitochondrial release factor family. In terms of processing, methylated by PrmC. Methylation increases the termination efficiency of RF1.

The protein resides in the cytoplasm. Functionally, peptide chain release factor 1 directs the termination of translation in response to the peptide chain termination codons UAG and UAA. In Cupriavidus taiwanensis (strain DSM 17343 / BCRC 17206 / CCUG 44338 / CIP 107171 / LMG 19424 / R1) (Ralstonia taiwanensis (strain LMG 19424)), this protein is Peptide chain release factor 1.